The primary structure comprises 131 residues: Small ribosomal subunit protein uS11 (131 aa).

This sequence belongs to the universal ribosomal protein uS11 family. Part of the 30S ribosomal subunit. Interacts with proteins S7 and S18. Binds to IF-3.

In terms of biological role, located on the platform of the 30S subunit, it bridges several disparate RNA helices of the 16S rRNA. Forms part of the Shine-Dalgarno cleft in the 70S ribosome. The protein is Small ribosomal subunit protein uS11 of Helicobacter pylori (strain ATCC 700392 / 26695) (Campylobacter pylori).